The chain runs to 447 residues: Tubulin beta-2 chain (447 aa).

GTP-binding residues include glutamine 11, glutamate 69, serine 138, glycine 142, threonine 143, glycine 144, asparagine 204, and asparagine 226. Glutamate 69 is a binding site for Mg(2+). The interval 419-447 (VSEYQQYQDATADDEGEYEDEEEEADLQD) is disordered. A compositionally biased stretch (acidic residues) spans 429-447 (TADDEGEYEDEEEEADLQD).

It belongs to the tubulin family. In terms of assembly, dimer of alpha and beta chains. A typical microtubule is a hollow water-filled tube with an outer diameter of 25 nm and an inner diameter of 15 nM. Alpha-beta heterodimers associate head-to-tail to form protofilaments running lengthwise along the microtubule wall with the beta-tubulin subunit facing the microtubule plus end conferring a structural polarity. Microtubules usually have 13 protofilaments but different protofilament numbers can be found in some organisms and specialized cells. The cofactor is Mg(2+). In terms of tissue distribution, expressed in leaf sheaths and suspension cultured cells.

It is found in the cytoplasm. Its subcellular location is the cytoskeleton. In terms of biological role, tubulin is the major constituent of microtubules, a cylinder consisting of laterally associated linear protofilaments composed of alpha- and beta-tubulin heterodimers. Microtubules grow by the addition of GTP-tubulin dimers to the microtubule end, where a stabilizing cap forms. Below the cap, tubulin dimers are in GDP-bound state, owing to GTPase activity of alpha-tubulin. This Oryza sativa subsp. japonica (Rice) protein is Tubulin beta-2 chain (TUBB2).